Here is a 159-residue protein sequence, read N- to C-terminus: Bacterial non-heme ferritin (159 aa).

A Ferritin-like diiron domain is found at methionine 1–glycine 145. The Fe cation site is built by glutamate 17, glutamate 50, histidine 53, glutamate 94, and glutamine 127.

The protein belongs to the ferritin family. Prokaryotic subfamily. In terms of assembly, homooligomer of 24 subunits that assemble into a spherical protein shell (12 +/- 1 nM diameter) that can sequester at least 2000 iron atoms.

The enzyme catalyses 4 Fe(2+) + O2 + 6 H2O = 4 iron(III) oxide-hydroxide + 12 H(+). May alleviate iron toxicity in the presence of oxygen. The polypeptide is Bacterial non-heme ferritin (ftnA) (Bacteroides fragilis (strain 638R)).